The chain runs to 470 residues: 6-phospho-beta-glucosidase BglB (470 aa).

Catalysis depends on Glu172, which acts as the Proton donor. Residue Glu361 is the Nucleophile of the active site.

This sequence belongs to the glycosyl hydrolase 1 family.

The enzyme catalyses 6-phospho-beta-D-glucosyl-(1-&gt;4)-D-glucose + H2O = D-glucose 6-phosphate + D-glucose. Catalyzes the hydrolysis of phosphorylated beta-glucosides into glucose-6-phosphate (G-6-P) and aglycone. It has a high affinity for phosphorylated aromatic beta-glucosides (p-nitrophenyl-beta-glucoside, phenyl beta-glucoside, arbutin and phosphorylated salicin), and a low affinity for phosphorylated beta-methyl-glucoside. The polypeptide is 6-phospho-beta-glucosidase BglB (bglB) (Escherichia coli (strain K12)).